A 477-amino-acid chain; its full sequence is Probable F-box protein At5g25300 (477 aa).

Positions 346-377 form a coiled coil; that stretch reads VDMNKEDSQIEINEKETKINQEHDQSDETQAK. In terms of domain architecture, F-box spans 412–458; sequence SPPWSELPGDILRSVFERLSFVDFQRAKQTCPIKRSKSNCLRLWLIT.

The chain is Probable F-box protein At5g25300 from Arabidopsis thaliana (Mouse-ear cress).